A 122-amino-acid polypeptide reads, in one-letter code: Large ribosomal subunit protein uL14 (122 aa).

Belongs to the universal ribosomal protein uL14 family. Part of the 50S ribosomal subunit. Forms a cluster with proteins L3 and L19. In the 70S ribosome, L14 and L19 interact and together make contacts with the 16S rRNA in bridges B5 and B8.

Binds to 23S rRNA. Forms part of two intersubunit bridges in the 70S ribosome. The sequence is that of Large ribosomal subunit protein uL14 from Trichormus variabilis (strain ATCC 29413 / PCC 7937) (Anabaena variabilis).